A 274-amino-acid polypeptide reads, in one-letter code: Putative bidirectional sugar transporter SWEET7d (274 aa).

The Extracellular portion of the chain corresponds to 1–8; the sequence is MVPDLIRN. A helical transmembrane segment spans residues 9-29; the sequence is VVGIVGNVISFGLFLSPVPTF. The MtN3/slv 1 domain maps to 9–96; it reads VVGIVGNVIS…TIFFLFSDKK (88 aa). Topologically, residues 30–45 are cytoplasmic; sequence WRIIKNKDVRDFKADQ. A helical transmembrane segment spans residues 46–66; that stretch reads YLATLLNCMLWVFYGLPIVHP. The Extracellular portion of the chain corresponds to 67–68; it reads NS. Residues 69–89 form a helical membrane-spanning segment; it reads ILVVTINGIGLVIEAVYLTIF. Residues 90–100 are Cytoplasmic-facing; the sequence is FLFSDKKNKKK. Residues 101-121 form a helical membrane-spanning segment; that stretch reads MGVVLATEALFMAAVALGVLL. At 122–130 the chain is on the extracellular side; it reads DAHTHQRRS. A helical membrane pass occupies residues 131 to 151; it reads LIVGILCVIFGTIMYSSPLTI. Positions 132–214 constitute a MtN3/slv 2 domain; that stretch reads IVGILCVIFG…QLILYAIYYR (83 aa). Residues 152–164 are Cytoplasmic-facing; it reads MSQVVKTKSVEYM. Residues 165-185 form a helical membrane-spanning segment; it reads PLLLSVVSFLNGLCWTSYALI. At 186–188 the chain is on the extracellular side; sequence RFD. Residues 189–209 traverse the membrane as a helical segment; that stretch reads IFITIPNGLGVLFALMQLILY. The Cytoplasmic segment spans residues 210-274; the sequence is AIYYRTTPKK…SISRLSHKLA (65 aa). The disordered stretch occupies residues 218–274; that stretch reads KKPSTTGPHPRSRIRTSSYQPSPPSPRAPASSPLSARTTTSMAAMSPSISRLSHKLA. Positions 245-258 are enriched in low complexity; that stretch reads APASSPLSARTTTS.

This sequence belongs to the SWEET sugar transporter family. As to quaternary structure, forms homooligomers and/or heterooligomers.

The protein resides in the cell membrane. In terms of biological role, mediates both low-affinity uptake and efflux of sugar across the plasma membrane. This chain is Putative bidirectional sugar transporter SWEET7d (SWEET7D), found in Oryza sativa subsp. japonica (Rice).